The following is a 194-amino-acid chain: Cell division protein SepF (194 aa).

Disordered regions lie at residues 35–54 (DHRSDHASGGALATPSDSSP) and 159–194 (SAPSMVSQDHDSVPSSSQQTGAAPVPAWEATSAGGL).

It belongs to the SepF family. In terms of assembly, homodimer. Interacts with FtsZ.

It localises to the cytoplasm. Cell division protein that is part of the divisome complex and is recruited early to the Z-ring. Probably stimulates Z-ring formation, perhaps through the cross-linking of FtsZ protofilaments. Its function overlaps with FtsA. The polypeptide is Cell division protein SepF (Prochlorococcus marinus (strain MIT 9313)).